Here is a 924-residue protein sequence, read N- to C-terminus: Ubiquitin carboxyl-terminal hydrolase 15 (924 aa).

Zn(2+) contacts are provided by Cys-130, Cys-133, Cys-141, Cys-144, Cys-150, Cys-154, His-163, and Cys-167. Residues 130 to 167 form an MYND-type zinc finger; it reads CARCFGPAKTRCSRCKSVRYCSGKCQIIHWRVAHKDEC. Polar residues predominate over residues 226-236; that stretch reads DITPQINTQGR. Disordered stretches follow at residues 226–301 and 317–366; these read DITP…VDSS and SHKH…TSKK. The span at 247-256 shows a compositional bias: basic and acidic residues; that stretch reads ANRESCRRDS. Residues 331–362 show a composition bias toward polar residues; the sequence is GCPNTQYPSNGTRTATLPRTGINKSGEQSCTE. The 307-residue stretch at 438 to 744 folds into the USP domain; that stretch reads RGLVNCGNSC…GAYMLFYMRS (307 aa). Cys-447 (nucleophile) is an active-site residue. The Proton acceptor role is filled by His-703. The interval 750-793 is disordered; that stretch reads RGEHNGKAPVHHSQPRNEMKEQRKPVNRFKPRADHKNTESSSSE. Positions 764 to 773 are enriched in basic and acidic residues; the sequence is PRNEMKEQRK.

Belongs to the peptidase C19 family. As to quaternary structure, interacts with DA1. As to expression, highly expressed in rosette leaves and inflorescence. Expressed at low levels in cotyledons, stems, cauline leaves and siliques.

The protein resides in the cytoplasm. It is found in the nucleus. It carries out the reaction Thiol-dependent hydrolysis of ester, thioester, amide, peptide and isopeptide bonds formed by the C-terminal Gly of ubiquitin (a 76-residue protein attached to proteins as an intracellular targeting signal).. Recognizes and hydrolyzes the peptide bond at the C-terminal Gly of ubiquitin. Involved in the processing of poly-ubiquitin precursors as well as that of ubiquitinated proteins. Involved in the regulation of organ size. Acts as a positive regulator of cell proliferation. Possesses deubiquitinating enzyme activity in vitro. The enzyme activity of UBP15 is required for its function in regulation of cell proliferation. Functions antagonistically in a common pathway with DA1 to regulate seed size. Acts maternally to regulate seed size by promoting cell proliferation in the integuments of ovules and developing seeds. Functions independently of DA2 and BB. The protein is Ubiquitin carboxyl-terminal hydrolase 15 of Arabidopsis thaliana (Mouse-ear cress).